The following is a 267-amino-acid chain: Probable tetrahydroxynaphthalene reductase MYCGRDRAFT_87994 (267 aa).

Positions 26, 72, 99, and 132 each coordinate NADP(+). The Proton donor role is filled by serine 149. Tyrosine 163, lysine 167, isoleucine 196, and threonine 198 together coordinate NADP(+). Catalysis depends on tyrosine 163, which acts as the Proton acceptor. Residue lysine 167 is the Lowers pKa of active site Tyr of the active site.

This sequence belongs to the short-chain dehydrogenases/reductases (SDR) family. In terms of assembly, homotetramer.

The catalysed reaction is scytalone + NADP(+) = naphthalene-1,3,6,8-tetrol + NADPH + H(+). The protein operates within pigment biosynthesis; melanin biosynthesis. Probable tetrahydroxynaphthalene reductase; part of the gene cluster 29 that mediates the biosynthesis dihydroxynaphthalene (DHN)-melanin, a bluish-green pigment and a structural component of the conidial wall. Catalyzes the NADPH-dependent reduction of 1,3,6,8-tetrahydroxynaphthalene (T4HN) into (+)-scytalone. This Zymoseptoria tritici (strain CBS 115943 / IPO323) (Speckled leaf blotch fungus) protein is Probable tetrahydroxynaphthalene reductase MYCGRDRAFT_87994.